Here is a 435-residue protein sequence, read N- to C-terminus: Zinc metalloproteinase/disintegrin (435 aa).

Positions Lys1–Glu26 are excised as a propeptide. The residue at position 27 (Gln27) is a Pyrrolidone carboxylic acid. Residues Arg33 to Pro227 form the Peptidase M12B domain. Asn115 carries N-linked (GlcNAc...) asparagine glycosylation. Cystine bridges form between Cys144–Cys222, Cys184–Cys206, and Cys186–Cys189. A Zn(2+)-binding site is contributed by His169. Glu170 is an active-site residue. The Zn(2+) site is built by His173 and His179. Residues Leu228 to Leu243 constitute a propeptide that is removed on maturation. Residues Thr235 to Asn318 enclose the Disintegrin domain. Val237, Asn240, Leu242, Glu244, Glu247, and Asp250 together coordinate Ca(2+). 6 cysteine pairs are disulfide-bonded: Cys249–Cys264, Cys251–Cys259, Cys258–Cys281, Cys272–Cys278, Cys277–Cys303, and Cys290–Cys310. The D/ECD-tripeptide signature appears at Glu296–Asp298.

It belongs to the venom metalloproteinase (M12B) family. P-III subfamily. P-IIIb sub-subfamily. In terms of assembly, monomer. Requires Zn(2+) as cofactor. In terms of processing, the N-terminus of the metalloproteinase is blocked. As to expression, expressed by the venom gland.

Its subcellular location is the secreted. Its activity is regulated as follows. Inhibited by EDTA. Its function is as follows. Cleaves the alpha chain of fibrinogen (FGA) preferentially and cleaves the beta chain (FGB) either on longer incubation or at high concentrations. Induces apoptosis of endothelial cells (prior to cell detachment). In terms of biological role, disintegrin: inhibits platelet aggregation induced by ADP, thrombin, platelet-activating factor and collagen. Acts by inhibiting fibrinogen interaction with platelet receptors GPIIb/GPIIIa (ITGA2B/ITGB3). The chain is Zinc metalloproteinase/disintegrin from Craspedocephalus gramineus (Bamboo pit viper).